The chain runs to 301 residues: Phosphoribosylaminoimidazole-succinocarboxamide synthase (301 aa).

It belongs to the SAICAR synthetase family.

It catalyses the reaction 5-amino-1-(5-phospho-D-ribosyl)imidazole-4-carboxylate + L-aspartate + ATP = (2S)-2-[5-amino-1-(5-phospho-beta-D-ribosyl)imidazole-4-carboxamido]succinate + ADP + phosphate + 2 H(+). The protein operates within purine metabolism; IMP biosynthesis via de novo pathway; 5-amino-1-(5-phospho-D-ribosyl)imidazole-4-carboxamide from 5-amino-1-(5-phospho-D-ribosyl)imidazole-4-carboxylate: step 1/2. This is Phosphoribosylaminoimidazole-succinocarboxamide synthase (ADE1) from Cyberlindnera jadinii (Torula yeast).